A 164-amino-acid chain; its full sequence is FMN reductase (NADH) RutF (164 aa).

This sequence belongs to the non-flavoprotein flavin reductase family. RutF subfamily.

It carries out the reaction FMNH2 + NAD(+) = FMN + NADH + 2 H(+). Its function is as follows. Catalyzes the reduction of FMN to FMNH2 which is used to reduce pyrimidine by RutA via the Rut pathway. The sequence is that of FMN reductase (NADH) RutF from Klebsiella pneumoniae (strain 342).